A 65-amino-acid chain; its full sequence is Large ribosomal subunit protein bL32 (65 aa).

Over residues 1–18 (MAVPKRRHSKSRTRKRRS) the composition is skewed to basic residues. Positions 1–20 (MAVPKRRHSKSRTRKRRSTY) are disordered.

It belongs to the bacterial ribosomal protein bL32 family.

The sequence is that of Large ribosomal subunit protein bL32 from Salinibacter ruber (strain DSM 13855 / M31).